Reading from the N-terminus, the 175-residue chain is Large ribosomal subunit protein uL10 (175 aa).

It belongs to the universal ribosomal protein uL10 family. Part of the ribosomal stalk of the 50S ribosomal subunit. The N-terminus interacts with L11 and the large rRNA to form the base of the stalk. The C-terminus forms an elongated spine to which L12 dimers bind in a sequential fashion forming a multimeric L10(L12)X complex.

Its function is as follows. Forms part of the ribosomal stalk, playing a central role in the interaction of the ribosome with GTP-bound translation factors. This chain is Large ribosomal subunit protein uL10, found in Psychrobacter cryohalolentis (strain ATCC BAA-1226 / DSM 17306 / VKM B-2378 / K5).